The following is a 522-amino-acid chain: MSKQKLWIDDLNSFFGDWSLIPTSKMTREEKLNTITRLILIASLVLLLFGKKDASLYILIIGLIIVIVIYSQEKPSTVEGFEIINGEIVDDEGEKNEIATNLGTPSSYQGGASKGRTIGGVTLPGGRAPIYTCNVTYYPTTMSGNSVMITGKNNALVGPQNPKTLMPPPIAPPLGDLDTWKASEWTTHSHVNSRTVQYEDEAGPFRTFNNNDERVLPVNCLSSYEDDQANNPCFRRYQSGIGIKNEIGIMEPFEHTPNLIKGETPPLIKELDEPYEPTFARRANDEKDIIEPFISELQPGIYSSNIDQPILDNAGLLPDMPQPQTTLFTPMINGKPRDKMQIYVEDKEADAIPGITDSGYHTLDRAYDLPQRYVRERLPKRYGEWRARRSTMPGIPFETPVGYGSGARPIGSFPTEGAVVSPPGNACTGWVTGIENVRDLSGQSEMSEYYNKNKLDMFDVDENAPLYAINPDAVKMHIDVTNRFRSDMQESLMRKRNAEAWQRKMYPLDTNHRRMLGGTGQF.

2 helical membrane passes run 33–50 (NTIT…LLFG) and 55–72 (SLYI…IYSQ).

The protein belongs to the IIV-6 213R family.

It localises to the membrane. The protein is Transmembrane protein 213R of Invertebrate iridescent virus 6 (IIV-6).